Reading from the N-terminus, the 542-residue chain is Ribonuclease Y (542 aa).

Residues 1–21 traverse the membrane as a helical segment; it reads MLIALIAVSVLAVAAIIGSLA. Positions 52-92 are disordered; the sequence is SRASQDLADSRKDVAKARAELESSRTRASDEARRADNADQA. Residues 59 to 92 are compositionally biased toward basic and acidic residues; sequence ADSRKDVAKARAELESSRTRASDEARRADNADQA. In terms of domain architecture, KH spans 229–289; sequence VVSVVPLPSN…MRREVARQAL (61 aa). The 95-residue stretch at 355–449 folds into the HD domain; sequence VLDHCVECAR…VKAADAISAA (95 aa).

This sequence belongs to the RNase Y family.

The protein resides in the cell membrane. Its function is as follows. Endoribonuclease that initiates mRNA decay. This Cutibacterium acnes (strain DSM 16379 / KPA171202) (Propionibacterium acnes) protein is Ribonuclease Y.